The primary structure comprises 771 residues: ATP-dependent DNA helicase UvrD1 (771 aa).

Residues 1–21 (MSVHATDAKPPGPSPADQLLD) form a disordered region. The region spanning 21 to 311 (DGLNPQQRQA…ILLEQNYRST (291 aa)) is the UvrD-like helicase ATP-binding domain. ATP-binding positions include 45 to 50 (GSGKTA) and R309. In terms of domain architecture, UvrD-like helicase C-terminal spans 312 to 603 (QNILSAANSV…TLMTLHTAKG (292 aa)). The segment at 691-716 (FSAPVSGAGRFGSARPSPTRSGASRR) is disordered.

Belongs to the helicase family. UvrD subfamily. Monomer. Mg(2+) serves as cofactor.

The enzyme catalyses Couples ATP hydrolysis with the unwinding of duplex DNA by translocating in the 3'-5' direction.. The catalysed reaction is ATP + H2O = ADP + phosphate + H(+). Functionally, DNA-dependent ATPase, acting on dsDNA with a 3'-ssDNA tail, unwinding with 3'-to 5'-polarity. Also highly efficient on nicked DNA. Involved in the post-incision events of nucleotide excision repair. The sequence is that of ATP-dependent DNA helicase UvrD1 (uvrD1) from Mycobacterium bovis (strain ATCC BAA-935 / AF2122/97).